Consider the following 201-residue polypeptide: Large ribosomal subunit protein uL4 (201 aa).

The segment at 44-71 (RAQKTRAEVSGSGKKPWRQKGTGRARSG) is disordered.

It belongs to the universal ribosomal protein uL4 family. In terms of assembly, part of the 50S ribosomal subunit.

In terms of biological role, one of the primary rRNA binding proteins, this protein initially binds near the 5'-end of the 23S rRNA. It is important during the early stages of 50S assembly. It makes multiple contacts with different domains of the 23S rRNA in the assembled 50S subunit and ribosome. Functionally, forms part of the polypeptide exit tunnel. In Proteus mirabilis (strain HI4320), this protein is Large ribosomal subunit protein uL4.